Here is a 173-residue protein sequence, read N- to C-terminus: NADH-ubiquinone oxidoreductase chain 6 (173 aa).

A run of 5 helical transmembrane segments spans residues 1 to 21 (MTYF…AVAS), 27 to 47 (YGVV…LSLG), 48 to 68 (ASFV…VVFV), 87 to 107 (VIGY…IGGF), and 139 to 159 (WGAG…FVVL).

This sequence belongs to the complex I subunit 6 family.

The protein localises to the mitochondrion membrane. The enzyme catalyses a ubiquinone + NADH + 5 H(+)(in) = a ubiquinol + NAD(+) + 4 H(+)(out). Functionally, core subunit of the mitochondrial membrane respiratory chain NADH dehydrogenase (Complex I) that is believed to belong to the minimal assembly required for catalysis. Complex I functions in the transfer of electrons from NADH to the respiratory chain. The immediate electron acceptor for the enzyme is believed to be ubiquinone. The sequence is that of NADH-ubiquinone oxidoreductase chain 6 (MT-ND6) from Brachyramphus brevirostris (Kittlitz's murrelet).